Here is a 154-residue protein sequence, read N- to C-terminus: Large ribosomal subunit protein uL13 (154 aa).

Belongs to the universal ribosomal protein uL13 family. Part of the 50S ribosomal subunit.

Functionally, this protein is one of the early assembly proteins of the 50S ribosomal subunit, although it is not seen to bind rRNA by itself. It is important during the early stages of 50S assembly. The sequence is that of Large ribosomal subunit protein uL13 from Brucella abortus (strain S19).